A 79-amino-acid polypeptide reads, in one-letter code: Defensin-like protein 272 (79 aa).

A signal peptide spans 1 to 24 (MSSKIKFVALLIVVISLLLNNAQS). 4 disulfides stabilise this stretch: Cys-34/Cys-77, Cys-43/Cys-63, Cys-49/Cys-75, and Cys-53/Cys-76.

Belongs to the DEFL family.

Its subcellular location is the secreted. The polypeptide is Defensin-like protein 272 (Arabidopsis thaliana (Mouse-ear cress)).